A 424-amino-acid chain; its full sequence is Serine hydroxymethyltransferase (424 aa).

(6S)-5,6,7,8-tetrahydrofolate-binding positions include leucine 126 and 130–132 (GHL). Lysine 235 carries the N6-(pyridoxal phosphate)lysine modification. A (6S)-5,6,7,8-tetrahydrofolate-binding site is contributed by 359–361 (SPF).

It belongs to the SHMT family. Homodimer. Pyridoxal 5'-phosphate is required as a cofactor.

The protein localises to the cytoplasm. The enzyme catalyses (6R)-5,10-methylene-5,6,7,8-tetrahydrofolate + glycine + H2O = (6S)-5,6,7,8-tetrahydrofolate + L-serine. It participates in one-carbon metabolism; tetrahydrofolate interconversion. The protein operates within amino-acid biosynthesis; glycine biosynthesis; glycine from L-serine: step 1/1. Catalyzes the reversible interconversion of serine and glycine with tetrahydrofolate (THF) serving as the one-carbon carrier. This reaction serves as the major source of one-carbon groups required for the biosynthesis of purines, thymidylate, methionine, and other important biomolecules. Also exhibits THF-independent aldolase activity toward beta-hydroxyamino acids, producing glycine and aldehydes, via a retro-aldol mechanism. This Prochlorococcus marinus (strain MIT 9303) protein is Serine hydroxymethyltransferase.